The sequence spans 166 residues: Large ribosomal subunit protein eL21 (166 aa).

The protein belongs to the eukaryotic ribosomal protein eL21 family. Component of the large ribosomal subunit.

It localises to the cytoplasm. The protein localises to the cytosol. The protein resides in the endoplasmic reticulum. Functionally, component of the large ribosomal subunit. The ribosome is a large ribonucleoprotein complex responsible for the synthesis of proteins in the cell. The chain is Large ribosomal subunit protein eL21 (RPL21) from Entamoeba histolytica (strain ATCC 30459 / HM-1:IMSS / ABRM).